A 374-amino-acid polypeptide reads, in one-letter code: Probable neutral protease 2 homolog TRV_05367 (374 aa).

Residues 1-19 (MQVIVALAALGSLAAPALG) form the signal peptide. Positions 20–189 (FSIPRGVPVS…RGPLTRINKR (170 aa)) are excised as a propeptide. Cystine bridges form between Cys-197–Cys-267 and Cys-274–Cys-292. A Zn(2+)-binding site is contributed by His-317. The active site involves Glu-318. Positions 321 and 332 each coordinate Zn(2+).

It belongs to the peptidase M35 family. Zn(2+) is required as a cofactor.

The protein resides in the secreted. It carries out the reaction Preferential cleavage of bonds with hydrophobic residues in P1'. Also 3-Asn-|-Gln-4 and 8-Gly-|-Ser-9 bonds in insulin B chain.. In terms of biological role, probable secreted metalloprotease that shows high activities on basic nuclear substrates such as histone and protamine. May be involved in virulence. This chain is Probable neutral protease 2 homolog TRV_05367, found in Trichophyton verrucosum (strain HKI 0517).